Reading from the N-terminus, the 226-residue chain is Ribosomal RNA small subunit methyltransferase G (226 aa).

Residues glycine 95, leucine 100, 146-147 (VE), and arginine 159 contribute to the S-adenosyl-L-methionine site.

The protein belongs to the methyltransferase superfamily. RNA methyltransferase RsmG family.

The protein localises to the cytoplasm. It catalyses the reaction guanosine(527) in 16S rRNA + S-adenosyl-L-methionine = N(7)-methylguanosine(527) in 16S rRNA + S-adenosyl-L-homocysteine. In terms of biological role, specifically methylates the N7 position of guanine in position 527 of 16S rRNA. The chain is Ribosomal RNA small subunit methyltransferase G from Acidovorax ebreus (strain TPSY) (Diaphorobacter sp. (strain TPSY)).